The following is a 3351-amino-acid chain: Apolipophorins (3351 aa).

An N-terminal signal peptide occupies residues 1 to 25 (MARMKYNIALIGILASVLLTIAVNA). The 599-residue stretch at 43-641 (YIPGNYYDYS…SQHGFLPRSS (599 aa)) folds into the Vitellogenin domain. N-linked (GlcNAc...) asparagine glycans are attached at residues asparagine 67, asparagine 644, asparagine 1514, asparagine 1744, asparagine 1932, asparagine 1979, and asparagine 2822. The VWFD domain occupies 2786–2952 (LRGHVVDGKH…DYGVGKCTAI (167 aa)).

Interacts with Nrx-1 (via cytoplasmic domain); the interaction supports apolpp/ApoLI protein stability. May be modified covalently by lipidation. Post-translationally, cleaved into 2 chains by furin protease. However, prevention of cleavage does not impair its function. As to expression, during stage 12, it is highly present throughout the yolk sac. By late stage 14, it localizes in the lateral fat body cells. Starting at stage 14, it localizes to the apodemes. Component of hemolymph clots (at protein level). Expressed in the amniosera. Expressed in rhabdomere of photoreceptor cells in retina (at protein level). In terms of tissue distribution, expressed in rhabdomere of photoreceptor cells in retina (at protein level). Expressed in simper cells as well as interphotoreceptor matrix (at protein level).

It localises to the secreted. Its subcellular location is the cell projection. It is found in the rhabdomere. Functionally, constitutes the major component of lipophorin, which mediates transport for various types of lipids in hemolymph. Acts by forming lipoprotein particles that bind lipoproteins and lipids. Also involved in the transport of hydrophobic ligands like juvenile hormones, pheromone hydrocarbons and carotenoids. Required for morphogens wingless (wg) and hedgehog (hh) function, probably by acting as vehicles for the movement of wg and hh, explaining how covalently lipidated wg and hh can spread over long distances. May also be involved in transport and/or metabolism of heme. Involved in yolk granule formation. May be a component of yolk incorporated into yolk granules via yl/yolkless-mediated endocytosis and the endolysosomal pathway. This chain is Apolipophorins, found in Drosophila melanogaster (Fruit fly).